We begin with the raw amino-acid sequence, 153 residues long: Small ribosomal subunit protein bS16 (153 aa).

Residues 130-153 (EAEAAAAAEEAPAEEAAEEAPAEA) are disordered. A compositionally biased stretch (acidic residues) spans 140-153 (APAEEAAEEAPAEA).

Belongs to the bacterial ribosomal protein bS16 family.

The chain is Small ribosomal subunit protein bS16 from Bifidobacterium longum subsp. infantis (strain ATCC 15697 / DSM 20088 / JCM 1222 / NCTC 11817 / S12).